A 300-amino-acid chain; its full sequence is Large ribosomal subunit protein uL18 (300 aa).

The span at 246 to 267 shows a compositional bias: basic and acidic residues; sequence NIRSDPKRDRKPKKDVSKEPKR. Positions 246-276 are disordered; it reads NIRSDPKRDRKPKKDVSKEPKRWNAKKLTNA.

This sequence belongs to the universal ribosomal protein uL18 family. In terms of assembly, component of the large ribosomal subunit (LSU).

The protein resides in the cytoplasm. Its subcellular location is the nucleus. Its function is as follows. Component of the ribosome, a large ribonucleoprotein complex responsible for the synthesis of proteins in the cell. The small ribosomal subunit (SSU) binds messenger RNAs (mRNAs) and translates the encoded message by selecting cognate aminoacyl-transfer RNA (tRNA) molecules. The large subunit (LSU) contains the ribosomal catalytic site termed the peptidyl transferase center (PTC), which catalyzes the formation of peptide bonds, thereby polymerizing the amino acids delivered by tRNAs into a polypeptide chain. The nascent polypeptides leave the ribosome through a tunnel in the LSU and interact with protein factors that function in enzymatic processing, targeting, and the membrane insertion of nascent chains at the exit of the ribosomal tunnel. This chain is Large ribosomal subunit protein uL18 (RpL5), found in Toxoptera citricida (Brown citrus aphid).